Here is a 226-residue protein sequence, read N- to C-terminus: Protein B (226 aa).

Residues 37-100 (DNVQGTDYEK…FSTQHLANKV (64 aa)) form an igG constant region-binding region. Repeats lie at residues 158-168 (TKSKLDKEIWN), 169-179 (TRFTRDKKVLN), and 180-190 (VKEFKVYNTLN).

The protein localises to the secreted. Functionally, protein B belongs to the group of bacterial Fc-binding protein. This chain is Protein B, found in Streptococcus agalactiae.